The sequence spans 144 residues: Large ribosomal subunit protein uL16 (144 aa).

Belongs to the universal ribosomal protein uL16 family. As to quaternary structure, part of the 50S ribosomal subunit.

Binds 23S rRNA and is also seen to make contacts with the A and possibly P site tRNAs. This chain is Large ribosomal subunit protein uL16, found in Oceanobacillus iheyensis (strain DSM 14371 / CIP 107618 / JCM 11309 / KCTC 3954 / HTE831).